Here is a 128-residue protein sequence, read N- to C-terminus: Large ribosomal subunit protein eL22 (128 aa).

It belongs to the eukaryotic ribosomal protein eL22 family. In terms of assembly, component of the large ribosomal subunit.

The protein localises to the cytoplasm. In terms of biological role, component of the large ribosomal subunit. The ribosome is a large ribonucleoprotein complex responsible for the synthesis of proteins in the cell. In Gallus gallus (Chicken), this protein is Large ribosomal subunit protein eL22 (RPL22).